The sequence spans 411 residues: GPI-anchor transamidase (411 aa).

Positions 1–22 are cleaved as a signal peptide; sequence MRIAMHLPLLLLYIFLLPLSGA. The Lumenal portion of the chain corresponds to 23 to 376; that stretch reads NNTDAAHEVI…DIDSNECFFT (354 aa). Residues His157 and Cys199 contribute to the active site. Residues Asn256 and Asn346 are each glycosylated (N-linked (GlcNAc...) asparagine). Residues 377–397 form a helical membrane-spanning segment; sequence SFKQSATIILALIVTILWFML. Residues 398-411 are Cytoplasmic-facing; it reads RGNTAKATYDLYTN.

The protein belongs to the peptidase C13 family. In terms of assembly, forms a complex with CDC91, GPI16, GPI17 and GAA1. In terms of processing, the disulfide bond between GPI8 and GPI16 is important for normal enzyme activity.

The protein resides in the endoplasmic reticulum membrane. Its pathway is glycolipid biosynthesis; glycosylphosphatidylinositol-anchor biosynthesis. Mediates GPI anchoring in the endoplasmic reticulum, by replacing a protein's C-terminal GPI attachment signal peptide with a pre-assembled GPI. During this transamidation reaction, the GPI transamidase forms a carbonyl intermediate with the substrate protein. The protein is GPI-anchor transamidase (GPI8) of Saccharomyces cerevisiae (strain ATCC 204508 / S288c) (Baker's yeast).